Here is a 110-residue protein sequence, read N- to C-terminus: MSEEKPKEGVKTENDHINLKVAGQDGSVVQFKIKRHTPLSKLMKAYCERQGLSMRQIRFRFDGQPINETDTPAQLEMEDEDTIDVFQQQTGGTASRASVPTPSHFPDICY.

Residues Lys-5 and Lys-7 each participate in a glycyl lysine isopeptide (Lys-Gly) (interchain with G-Cter in SUMO2) cross-link. A Glycyl lysine isopeptide (Lys-Gly) (interchain with G-Cter in SUMO); alternate cross-link involves residue Lys-11. A Glycyl lysine isopeptide (Lys-Gly) (interchain with G-Cter in SUMO2); alternate cross-link involves residue Lys-11. The 78-residue stretch at Asp-15–Gly-92 folds into the Ubiquitin-like domain. The segment covering Gln-89 to Thr-101 has biased composition (polar residues). A disordered region spans residues Gln-89–Tyr-110. Residue Gly-92 forms a Glycyl lysine isopeptide (Gly-Lys) (interchain with K-? in acceptor proteins) linkage. A propeptide spanning residues Thr-93 to Tyr-110 is cleaved from the precursor.

It belongs to the ubiquitin family. SUMO subfamily. In terms of assembly, interacts with SAE2 and UBE2I. Covalently attached to a number of proteins. Interacts with USP25 (via ts SIM domain); the interaction sumoylates USP25 and inhibits its ubiquitin hydrolyzing activity. Interacts with BMAL1. Polymeric chains can be formed through Lys-11 cross-linking. In terms of processing, cleavage of precursor form by SENP1, SENP2 or SENP5 is necessary for function.

It localises to the cytoplasm. The protein localises to the nucleus. The protein resides in the PML body. Its function is as follows. Ubiquitin-like protein which can be covalently attached to target lysines either as a monomer or as a lysine-linked polymer. Does not seem to be involved in protein degradation and may function as an antagonist of ubiquitin in the degradation process. Plays a role in a number of cellular processes such as nuclear transport, DNA replication and repair, mitosis and signal transduction. Covalent attachment to its substrates requires prior activation by the E1 complex SAE1-SAE2 and linkage to the E2 enzyme UBE2I, and can be promoted by an E3 ligase such as PIAS1-4, RANBP2 or CBX4. Plays a role in the regulation of sumoylation status of SETX. The chain is Small ubiquitin-related modifier 3 (Sumo3) from Rattus norvegicus (Rat).